A 217-amino-acid chain; its full sequence is Probable GTP-binding protein EngB (217 aa).

The region spanning 29–213 is the EngB-type G domain; sequence GPPEVAFAGR…RQAIAETVGI (185 aa). GTP-binding positions include 37–44, 64–68, 91–94, 158–161, and 192–194; these read GRSNVGKS, GRTQE, DMPG, TKTD, and TSS. Mg(2+)-binding residues include Ser-44 and Thr-66.

Belongs to the TRAFAC class TrmE-Era-EngA-EngB-Septin-like GTPase superfamily. EngB GTPase family. Requires Mg(2+) as cofactor.

Necessary for normal cell division and for the maintenance of normal septation. This is Probable GTP-binding protein EngB from Rhizobium etli (strain ATCC 51251 / DSM 11541 / JCM 21823 / NBRC 15573 / CFN 42).